A 121-amino-acid polypeptide reads, in one-letter code: Fluoride-specific ion channel FluC 2 (121 aa).

4 helical membrane-spanning segments follow: residues 3 to 23 (YLFV…LSTL), 27 to 47 (SGLP…MGYL), 64 to 84 (GVTT…FELV), and 92 to 112 (IALL…FCWF). Gly-71 and Thr-74 together coordinate Na(+).

It belongs to the fluoride channel Fluc/FEX (TC 1.A.43) family.

It is found in the cell membrane. The enzyme catalyses fluoride(in) = fluoride(out). Its activity is regulated as follows. Na(+) is not transported, but it plays an essential structural role and its presence is essential for fluoride channel function. Functionally, fluoride-specific ion channel. Important for reducing fluoride concentration in the cell, thus reducing its toxicity. The sequence is that of Fluoride-specific ion channel FluC 2 from Staphylococcus haemolyticus (strain JCSC1435).